The chain runs to 571 residues: Peptide-N4-(N-acetyl-beta-glucosaminyl)asparagine amidase A (571 aa).

N-linked (GlcNAc...) asparagine glycosylation is found at Asn121, Asn143, Asn197, Asn241, Asn318, Asn367, Asn390, Asn423, Asn457, Asn481, Asn524, and Asn529.

Heterodimer of a large and a small chain. Is highly glycosylated and is largly resistant against self-deglycosylation.

It carries out the reaction Hydrolysis of an N(4)-(acetyl-beta-D-glucosaminyl)asparagine residue in which the glucosamine residue may be further glycosylated, to yield a (substituted) N-acetyl-beta-D-glucosaminylamine and a peptide containing an aspartate residue.. This Prunus dulcis (Almond) protein is Peptide-N4-(N-acetyl-beta-glucosaminyl)asparagine amidase A.